The sequence spans 244 residues: 5-oxoprolinase subunit A (244 aa).

The protein belongs to the LamB/PxpA family. In terms of assembly, forms a complex composed of PxpA, PxpB and PxpC.

It carries out the reaction 5-oxo-L-proline + ATP + 2 H2O = L-glutamate + ADP + phosphate + H(+). Functionally, catalyzes the cleavage of 5-oxoproline to form L-glutamate coupled to the hydrolysis of ATP to ADP and inorganic phosphate. This chain is 5-oxoprolinase subunit A, found in Shigella flexneri serotype 5b (strain 8401).